We begin with the raw amino-acid sequence, 253 residues long: Acidic 26 kDa endochitinase (253 aa).

A signal peptide spans 1 to 24; it reads MKFNIVSPVALSCLFFLFLTGTLA. The active-site Proton donor is the Glu92. A disulfide bridge links Cys212 with Cys244.

Belongs to the glycosyl hydrolase 19 family. Chitinase class II subfamily.

The protein localises to the secreted. The protein resides in the extracellular space. The catalysed reaction is Random endo-hydrolysis of N-acetyl-beta-D-glucosaminide (1-&gt;4)-beta-linkages in chitin and chitodextrins.. Its function is as follows. Defense against chitin-containing fungal pathogens. The protein is Acidic 26 kDa endochitinase (CHI3) of Solanum lycopersicum (Tomato).